The primary structure comprises 381 residues: Cobalt-precorrin-5B C(1)-methyltransferase (381 aa).

It belongs to the CbiD family.

It carries out the reaction Co-precorrin-5B + S-adenosyl-L-methionine = Co-precorrin-6A + S-adenosyl-L-homocysteine. It participates in cofactor biosynthesis; adenosylcobalamin biosynthesis; cob(II)yrinate a,c-diamide from sirohydrochlorin (anaerobic route): step 6/10. Its function is as follows. Catalyzes the methylation of C-1 in cobalt-precorrin-5B to form cobalt-precorrin-6A. The sequence is that of Cobalt-precorrin-5B C(1)-methyltransferase from Prochlorococcus marinus (strain NATL2A).